A 421-amino-acid polypeptide reads, in one-letter code: Thymidine phosphorylase (421 aa).

This sequence belongs to the thymidine/pyrimidine-nucleoside phosphorylase family. Homodimer.

The catalysed reaction is thymidine + phosphate = 2-deoxy-alpha-D-ribose 1-phosphate + thymine. Functionally, the enzymes which catalyze the reversible phosphorolysis of pyrimidine nucleosides are involved in the degradation of these compounds and in their utilization as carbon and energy sources, or in the rescue of pyrimidine bases for nucleotide synthesis. The sequence is that of Thymidine phosphorylase (deoA) from Mycoplasma pneumoniae (strain ATCC 29342 / M129 / Subtype 1) (Mycoplasmoides pneumoniae).